We begin with the raw amino-acid sequence, 576 residues long: Small ribosomal subunit protein mS80 (rPPR6) (576 aa).

A mitochondrion-targeting transit peptide spans 1-76 (MLRSFLCRSQ…SLPADEIPIS (76 aa)). PPR repeat units lie at residues 230–264 (NLEILNELIALFGKLGKSKAAFDVFSKTEEFGFTP), 265–299 (NAKTYYLTLEALCKRSFMDWACSVCEKMLKSGVLS), 300–336 (EGEQMGNIITWFCKEGKAEEAYSVYELAKTKEKSLPP), 341–370 (TLITALCKNDGTITFAQEMLGDLSGEARRR), 371–405 (GIKPFSDVIHSLCRMRNVKDAKALLLDMISKGPAP), 406–440 (GNAVFNLVVHACSKTGDLDEAKEVLKLMESRGLKP), 441–475 (DVYTYTVIISGYAKGGMMDEAQEILAEAKKKHKKL), 476–510 (SPVTYHALIRGYCKIEEYDEALKLLNEMDRFGVQP), and 511–546 (NADEYNKLIQSFCLKALDWEKAEVLFEEMKQKGLHL).

This sequence belongs to the PPR family. P subfamily. As to quaternary structure, component of the mitochondrial ribosome small subunit.

The protein localises to the mitochondrion. This chain is Small ribosomal subunit protein mS80 (rPPR6), found in Arabidopsis thaliana (Mouse-ear cress).